Reading from the N-terminus, the 585-residue chain is Glutamate decarboxylase 2 (585 aa).

Residues 1-24 (MASPGSGFWSFGSEDGSGDPENSG) form a disordered region. A phosphoserine mark is found at Ser-3, Ser-6, Ser-10, and Ser-13. Residues Cys-30 and Cys-45 are each lipidated (S-palmitoyl cysteine). 181 to 183 (QLS) is a substrate binding site. Lys-396 is modified (N6-(pyridoxal phosphate)lysine). Arg-558 contacts substrate.

The protein belongs to the group II decarboxylase family. In terms of assembly, homodimer. Requires pyridoxal 5'-phosphate as cofactor. Post-translationally, phosphorylated; which does not affect kinetic parameters or subcellular location. In terms of processing, palmitoylated; which is required for presynaptic clustering.

Its subcellular location is the cytoplasm. The protein resides in the cytosol. It localises to the cytoplasmic vesicle. The protein localises to the presynaptic cell membrane. It is found in the golgi apparatus membrane. It carries out the reaction L-glutamate + H(+) = 4-aminobutanoate + CO2. Functionally, catalyzes the production of GABA. The chain is Glutamate decarboxylase 2 (GAD2) from Sus scrofa (Pig).